A 329-amino-acid chain; its full sequence is Peroxidase 73 (329 aa).

The first 25 residues, 1-25, serve as a signal peptide directing secretion; it reads MARFSLVVVVTLSLAISMFPDTTTA. Cystine bridges form between C36-C119, C69-C74, C125-C325, and C204-C236. H67 acts as the Proton acceptor in catalysis. 5 residues coordinate Ca(2+): D68, V71, G73, D75, and S77. P167 is a binding site for substrate. Residue H197 coordinates heme b. T198 contacts Ca(2+). An N-linked (GlcNAc...) asparagine glycan is attached at N215. The Ca(2+) site is built by D249, T252, and D257.

Belongs to the peroxidase family. Classical plant (class III) peroxidase subfamily. Requires heme b as cofactor. Ca(2+) is required as a cofactor. In terms of tissue distribution, expressed in the whole plant, with the highest expression in roots.

Its subcellular location is the secreted. The catalysed reaction is 2 a phenolic donor + H2O2 = 2 a phenolic radical donor + 2 H2O. Functionally, removal of H(2)O(2), oxidation of toxic reductants, biosynthesis and degradation of lignin, suberization, auxin catabolism, response to environmental stresses such as wounding, pathogen attack and oxidative stress. These functions might be dependent on each isozyme/isoform in each plant tissue. The chain is Peroxidase 73 (PER73) from Arabidopsis thaliana (Mouse-ear cress).